The sequence spans 250 residues: Probable aquaporin TIP2-2 (250 aa).

Met-1 is modified (N-acetylmethionine). The Cytoplasmic segment spans residues 1 to 24 (MVKIEIGSVGDSFSVASLKAYLSE). Residue Lys-3 is modified to N6,N6-dimethyllysine. The chain crosses the membrane as a helical span at residues 25–45 (FIATLLFVFAGVGSALAFAKL). The Vacuolar portion of the chain corresponds to 46 to 53 (TSDAALDP). A helical membrane pass occupies residues 54-74 (AGLVAVAVAHAFALFVGVSIA). The Cytoplasmic portion of the chain corresponds to 75–101 (ANISGGHLNPAVTLGLAVGGNITVITG). The NPA 1 motif lies at 83-85 (NPA). Residues 102 to 122 (FFYWIAQCLGSIVACLLLVFV) traverse the membrane as a helical segment. Topologically, residues 123 to 133 (TNGESVPTHGV) are vacuolar. Residues 134–154 (AAGLGAIEGVVMEIVVTFALV) form a helical membrane-spanning segment. Residues 155 to 168 (YTVYATAADPKKGS) are Cytoplasmic-facing. Residues 169-189 (LGTIAPIAIGFIVGANILAAG) form a helical membrane-spanning segment. Topologically, residues 190 to 210 (PFSGGSMNPARSFGPAVVSGD) are vacuolar. The NPA 2 signature appears at 197–199 (NPA). The helical transmembrane segment at 211–231 (FSQIWIYWVGPLVGGALAGLI) threads the bilayer. At 232–250 (YGDVFIGSYAPAPTTESYP) the chain is on the cytoplasmic side. Phosphoserine is present on Ser-248.

Belongs to the MIP/aquaporin (TC 1.A.8) family. TIP (TC 1.A.8.10) subfamily. As to quaternary structure, interacts with cucumber mosaic virus (CMV) Protein 1a. In terms of tissue distribution, expressed above groung and in roots.

It localises to the vacuole membrane. Its function is as follows. Aquaporins facilitate the transport of water and small neutral solutes across cell membranes. The sequence is that of Probable aquaporin TIP2-2 (TIP2-2) from Arabidopsis thaliana (Mouse-ear cress).